A 958-amino-acid chain; its full sequence is Glycine dehydrogenase (decarboxylating) (958 aa).

Lys-705 carries the N6-(pyridoxal phosphate)lysine modification.

The protein belongs to the GcvP family. The glycine cleavage system is composed of four proteins: P, T, L and H. Pyridoxal 5'-phosphate serves as cofactor.

The enzyme catalyses N(6)-[(R)-lipoyl]-L-lysyl-[glycine-cleavage complex H protein] + glycine + H(+) = N(6)-[(R)-S(8)-aminomethyldihydrolipoyl]-L-lysyl-[glycine-cleavage complex H protein] + CO2. The glycine cleavage system catalyzes the degradation of glycine. The P protein binds the alpha-amino group of glycine through its pyridoxal phosphate cofactor; CO(2) is released and the remaining methylamine moiety is then transferred to the lipoamide cofactor of the H protein. This is Glycine dehydrogenase (decarboxylating) from Synechococcus sp. (strain CC9902).